Reading from the N-terminus, the 162-residue chain is NADPH-dependent 7-cyano-7-deazaguanine reductase (162 aa).

Cys-53 (thioimide intermediate) is an active-site residue. Asp-60 serves as the catalytic Proton donor. Substrate is bound by residues 75–77 and 94–95; these read VES and HE.

This sequence belongs to the GTP cyclohydrolase I family. QueF type 1 subfamily.

It localises to the cytoplasm. It catalyses the reaction 7-aminomethyl-7-carbaguanine + 2 NADP(+) = 7-cyano-7-deazaguanine + 2 NADPH + 3 H(+). The protein operates within tRNA modification; tRNA-queuosine biosynthesis. Functionally, catalyzes the NADPH-dependent reduction of 7-cyano-7-deazaguanine (preQ0) to 7-aminomethyl-7-deazaguanine (preQ1). This is NADPH-dependent 7-cyano-7-deazaguanine reductase from Exiguobacterium sibiricum (strain DSM 17290 / CCUG 55495 / CIP 109462 / JCM 13490 / 255-15).